The following is a 699-amino-acid chain: Elongation factor G (699 aa).

A tr-type G domain is found at E8–I286. GTP is bound by residues A17 to T24, D84 to H88, and N138 to D141.

Belongs to the TRAFAC class translation factor GTPase superfamily. Classic translation factor GTPase family. EF-G/EF-2 subfamily.

It localises to the cytoplasm. Its function is as follows. Catalyzes the GTP-dependent ribosomal translocation step during translation elongation. During this step, the ribosome changes from the pre-translocational (PRE) to the post-translocational (POST) state as the newly formed A-site-bound peptidyl-tRNA and P-site-bound deacylated tRNA move to the P and E sites, respectively. Catalyzes the coordinated movement of the two tRNA molecules, the mRNA and conformational changes in the ribosome. In Aquifex pyrophilus, this protein is Elongation factor G (fusA).